The chain runs to 969 residues: RNA polymerase-associated protein RapA (969 aa).

The 171-residue stretch at 164 to 334 (EVGRRHAPRV…FARLRLLDSD (171 aa)) folds into the Helicase ATP-binding domain. 177 to 184 (DEVGLGKT) serves as a coordination point for ATP. A DEAH box motif is present at residues 280-283 (DEAH). Residues 492–668 (RVNWLLEKLK…GSNEALDDVI (177 aa)) form the Helicase C-terminal domain.

This sequence belongs to the SNF2/RAD54 helicase family. RapA subfamily. As to quaternary structure, interacts with the RNAP. Has a higher affinity for the core RNAP than for the holoenzyme. Its ATPase activity is stimulated by binding to RNAP.

In terms of biological role, transcription regulator that activates transcription by stimulating RNA polymerase (RNAP) recycling in case of stress conditions such as supercoiled DNA or high salt concentrations. Probably acts by releasing the RNAP, when it is trapped or immobilized on tightly supercoiled DNA. Does not activate transcription on linear DNA. Probably not involved in DNA repair. The polypeptide is RNA polymerase-associated protein RapA (Vibrio vulnificus (strain CMCP6)).